Reading from the N-terminus, the 131-residue chain is UPF0102 protein YraN (131 aa).

It belongs to the UPF0102 family.

This chain is UPF0102 protein YraN, found in Salmonella typhimurium (strain LT2 / SGSC1412 / ATCC 700720).